Reading from the N-terminus, the 105-residue chain is Large ribosomal subunit protein uL24 (105 aa).

It belongs to the universal ribosomal protein uL24 family. As to quaternary structure, part of the 50S ribosomal subunit.

Functionally, one of two assembly initiator proteins, it binds directly to the 5'-end of the 23S rRNA, where it nucleates assembly of the 50S subunit. One of the proteins that surrounds the polypeptide exit tunnel on the outside of the subunit. This is Large ribosomal subunit protein uL24 from Anaplasma marginale (strain St. Maries).